Reading from the N-terminus, the 563-residue chain is Sulfite reductase [NADPH] hemoprotein beta-component (563 aa).

4 residues coordinate [4Fe-4S] cluster: C427, C433, C472, and C476. C476 lines the siroheme pocket.

This sequence belongs to the nitrite and sulfite reductase 4Fe-4S domain family. Alpha(8)-beta(8). The alpha component is a flavoprotein, the beta component is a hemoprotein. The cofactor is siroheme. [4Fe-4S] cluster is required as a cofactor.

It carries out the reaction hydrogen sulfide + 3 NADP(+) + 3 H2O = sulfite + 3 NADPH + 4 H(+). It participates in sulfur metabolism; hydrogen sulfide biosynthesis; hydrogen sulfide from sulfite (NADPH route): step 1/1. Its function is as follows. Component of the sulfite reductase complex that catalyzes the 6-electron reduction of sulfite to sulfide. This is one of several activities required for the biosynthesis of L-cysteine from sulfate. In Acidithiobacillus ferrooxidans (strain ATCC 53993 / BNL-5-31) (Leptospirillum ferrooxidans (ATCC 53993)), this protein is Sulfite reductase [NADPH] hemoprotein beta-component.